We begin with the raw amino-acid sequence, 207 residues long: Ribosomal RNA large subunit methyltransferase E (207 aa).

The S-adenosyl-L-methionine site is built by G61, W63, D81, D97, and D122. The Proton acceptor role is filled by K162.

Belongs to the class I-like SAM-binding methyltransferase superfamily. RNA methyltransferase RlmE family.

Its subcellular location is the cytoplasm. It catalyses the reaction uridine(2552) in 23S rRNA + S-adenosyl-L-methionine = 2'-O-methyluridine(2552) in 23S rRNA + S-adenosyl-L-homocysteine + H(+). Its function is as follows. Specifically methylates the uridine in position 2552 of 23S rRNA at the 2'-O position of the ribose in the fully assembled 50S ribosomal subunit. The sequence is that of Ribosomal RNA large subunit methyltransferase E from Pseudomonas putida (strain ATCC 700007 / DSM 6899 / JCM 31910 / BCRC 17059 / LMG 24140 / F1).